Reading from the N-terminus, the 239-residue chain is 7-cyano-7-deazaguanine synthase (239 aa).

ATP is bound at residue 13–23; sequence LSGGLDSMVTA. Zn(2+) contacts are provided by Cys-193, Cys-203, Cys-206, and Cys-209.

Belongs to the QueC family. It depends on Zn(2+) as a cofactor.

It carries out the reaction 7-carboxy-7-deazaguanine + NH4(+) + ATP = 7-cyano-7-deazaguanine + ADP + phosphate + H2O + H(+). It participates in purine metabolism; 7-cyano-7-deazaguanine biosynthesis. In terms of biological role, catalyzes the ATP-dependent conversion of 7-carboxy-7-deazaguanine (CDG) to 7-cyano-7-deazaguanine (preQ(0)). This Erythrobacter litoralis (strain HTCC2594) protein is 7-cyano-7-deazaguanine synthase.